The chain runs to 446 residues: White-opaque regulator 2 (446 aa).

Over residues 1–24 (MTQLPSVSELINRTGSIGSSSNIT) the composition is skewed to polar residues. The tract at residues 1-203 (MTQLPSVSEL…QPNFPYHNNF (203 aa)) is disordered. The segment covering 30–64 (TTTSATNTTTAATATTVTSTTPRSENSYSPNSPYS) has biased composition (low complexity). The segment covering 67 to 86 (TRPSNTSLTNYSAGSGITVA) has biased composition (polar residues). Low complexity-rich tracts occupy residues 87 to 97 (SSSFQFSQPSP) and 104 to 120 (STSSQSSSGDSFQQHQS). Positions 121-144 (NPSGVSMSSNTSPRTSIVQSMSSV) are enriched in polar residues. Pro residues predominate over residues 166 to 184 (VQPPPQQQQLQQPPPPPPQ). Residues 185–195 (QQQHIYPQQQP) are compositionally biased toward low complexity. A DNA-binding region (zn(2)-C6 fungal-type) is located at residues 305 to 332 (CLTCRKRRIKCDERKPTCFNCERSKKSC). Residues 336 to 402 (QDLSKLPPRK…SGSSTNSRNL (67 aa)) form a disordered region. Residues 358–369 (NQQQQQQQQNQQ) are compositionally biased toward low complexity. Over residues 387 to 401 (HQITSISGSSTNSRN) the composition is skewed to polar residues.

The protein localises to the nucleus. In terms of biological role, transcriptional regulator of the switch between 2 heritable states, the white and opaque states. These 2 cell types differ in many characteristics, including cell structure, mating competence, and virulence. Each state is heritable for many generations, and switching between states occurs stochastically, at low frequency. WOR2 is necessary for the stability of the opaque state phenotypic switching from the white to the opaque phase is a necessary step for mating. Plays a role in cell adhesion and pseudohyphal growth. This Candida albicans (strain SC5314 / ATCC MYA-2876) (Yeast) protein is White-opaque regulator 2 (WOR2).